We begin with the raw amino-acid sequence, 260 residues long: 6-carboxyhexanoate--CoA ligase (260 aa).

It belongs to the BioW family. As to quaternary structure, homodimer. The cofactor is Mg(2+).

The catalysed reaction is heptanedioate + ATP + CoA = 6-carboxyhexanoyl-CoA + AMP + diphosphate. Its pathway is metabolic intermediate metabolism; pimeloyl-CoA biosynthesis; pimeloyl-CoA from pimelate: step 1/1. Its function is as follows. Catalyzes the transformation of pimelate into pimeloyl-CoA with concomitant hydrolysis of ATP to AMP. The protein is 6-carboxyhexanoate--CoA ligase of Fibrobacter succinogenes (strain ATCC 19169 / S85).